We begin with the raw amino-acid sequence, 193 residues long: Der GTPase-activating protein YihI (193 aa).

The span at 1 to 12 (MSAKQPNRKPTG) shows a compositional bias: basic residues. Disordered stretches follow at residues 1-91 (MSAK…KLVM) and 143-193 (IIDN…PKKK). Basic and acidic residues predominate over residues 13-26 (KRKESDASALDGRE). A compositionally biased stretch (basic residues) spans 27-36 (RKRAAKRKGL). Over residues 40–54 (SRQQAEQSSKNNNGK) the composition is skewed to polar residues. Positions 145–160 (DNDDDEEDDGSFDDAS) are enriched in acidic residues. Residues 184 to 193 (PEPKPEPKKK) are compositionally biased toward basic and acidic residues.

Belongs to the YihI family. Interacts with Der.

Its function is as follows. A GTPase-activating protein (GAP) that modifies Der/EngA GTPase function. May play a role in ribosome biogenesis. The polypeptide is Der GTPase-activating protein YihI (Aeromonas salmonicida (strain A449)).